The primary structure comprises 120 residues: Ribonuclease P protein component (120 aa).

It belongs to the RnpA family. Consists of a catalytic RNA component (M1 or rnpB) and a protein subunit.

It catalyses the reaction Endonucleolytic cleavage of RNA, removing 5'-extranucleotides from tRNA precursor.. Its function is as follows. RNaseP catalyzes the removal of the 5'-leader sequence from pre-tRNA to produce the mature 5'-terminus. It can also cleave other RNA substrates such as 4.5S RNA. The protein component plays an auxiliary but essential role in vivo by binding to the 5'-leader sequence and broadening the substrate specificity of the ribozyme. This Chlamydia trachomatis serovar A (strain ATCC VR-571B / DSM 19440 / HAR-13) protein is Ribonuclease P protein component.